The sequence spans 206 residues: Outer-membrane lipoprotein LolB (206 aa).

An N-terminal signal peptide occupies residues 1 to 18 (MKTFKFLTALFATAILTA). The N-palmitoyl cysteine moiety is linked to residue Cys-19. Residue Cys-19 is the site of S-diacylglycerol cysteine attachment.

The protein belongs to the LolB family. As to quaternary structure, monomer.

The protein localises to the cell outer membrane. In terms of biological role, plays a critical role in the incorporation of lipoproteins in the outer membrane after they are released by the LolA protein. This Haemophilus influenzae (strain PittEE) protein is Outer-membrane lipoprotein LolB.